The following is a 202-amino-acid chain: Proteasome subunit beta 1 (202 aa).

Residue Met-1 is a propeptide, removed in mature form; by autocatalysis. Catalysis depends on Thr-2, which acts as the Nucleophile.

It belongs to the peptidase T1B family. As to quaternary structure, the 20S proteasome core is composed of 14 alpha and 14 beta subunits that assemble into four stacked heptameric rings, resulting in a barrel-shaped structure. The two inner rings, each composed of seven catalytic beta subunits, are sandwiched by two outer rings, each composed of seven alpha subunits. The catalytic chamber with the active sites is on the inside of the barrel. Has a gated structure, the ends of the cylinder being occluded by the N-termini of the alpha-subunits. Is capped at one or both ends by the proteasome regulatory ATPase, PAN.

It localises to the cytoplasm. It catalyses the reaction Cleavage of peptide bonds with very broad specificity.. Its activity is regulated as follows. The formation of the proteasomal ATPase PAN-20S proteasome complex, via the docking of the C-termini of PAN into the intersubunit pockets in the alpha-rings, triggers opening of the gate for substrate entry. Interconversion between the open-gate and close-gate conformations leads to a dynamic regulation of the 20S proteasome proteolysis activity. Component of the proteasome core, a large protease complex with broad specificity involved in protein degradation. The protein is Proteasome subunit beta 1 of Pyrobaculum arsenaticum (strain DSM 13514 / JCM 11321 / PZ6).